Consider the following 581-residue polypeptide: Arginine--tRNA ligase (581 aa).

Residues 122–132 (PNVAKPMHVGH) carry the 'HIGH' region motif.

The protein belongs to the class-I aminoacyl-tRNA synthetase family. Monomer.

The protein localises to the cytoplasm. The enzyme catalyses tRNA(Arg) + L-arginine + ATP = L-arginyl-tRNA(Arg) + AMP + diphosphate. This is Arginine--tRNA ligase from Francisella tularensis subsp. tularensis (strain FSC 198).